The following is a 326-amino-acid chain: Malate dehydrogenase (326 aa).

Residue 12 to 18 (GGTGQIA) coordinates NAD(+). Residues R93 and R99 each contribute to the substrate site. NAD(+)-binding positions include N106, Q113, and 130 to 132 (VGN). The substrate site is built by N132 and R163. H188 functions as the Proton acceptor in the catalytic mechanism.

It belongs to the LDH/MDH superfamily. MDH type 2 family.

It carries out the reaction (S)-malate + NAD(+) = oxaloacetate + NADH + H(+). Functionally, catalyzes the reversible oxidation of malate to oxaloacetate. The sequence is that of Malate dehydrogenase from Chlamydia trachomatis serovar A (strain ATCC VR-571B / DSM 19440 / HAR-13).